The sequence spans 342 residues: RNA 3'-terminal phosphate cyclase (342 aa).

ATP is bound by residues glutamine 100 and 283–287 (FLGDQ). The active-site Tele-AMP-histidine intermediate is histidine 307.

This sequence belongs to the RNA 3'-terminal cyclase family. Type 1 subfamily.

It localises to the cytoplasm. The catalysed reaction is a 3'-end 3'-phospho-ribonucleotide-RNA + ATP = a 3'-end 2',3'-cyclophospho-ribonucleotide-RNA + AMP + diphosphate. In terms of biological role, catalyzes the conversion of 3'-phosphate to a 2',3'-cyclic phosphodiester at the end of RNA. The mechanism of action of the enzyme occurs in 3 steps: (A) adenylation of the enzyme by ATP; (B) transfer of adenylate to an RNA-N3'P to produce RNA-N3'PP5'A; (C) and attack of the adjacent 2'-hydroxyl on the 3'-phosphorus in the diester linkage to produce the cyclic end product. The biological role of this enzyme is unknown but it is likely to function in some aspects of cellular RNA processing. The chain is RNA 3'-terminal phosphate cyclase (rtcA) from Pyrococcus abyssi (strain GE5 / Orsay).